Here is a 134-residue protein sequence, read N- to C-terminus: Small ribosomal subunit protein bS6 (134 aa).

The tract at residues 100–134 is disordered; it reads SFLARDETDRRERSEETAEGEGEPDHSANEAVVTA. The segment covering 103 to 115 has biased composition (basic and acidic residues); the sequence is ARDETDRRERSEE.

This sequence belongs to the bacterial ribosomal protein bS6 family.

Its function is as follows. Binds together with bS18 to 16S ribosomal RNA. The chain is Small ribosomal subunit protein bS6 from Acidithiobacillus ferrooxidans (strain ATCC 23270 / DSM 14882 / CIP 104768 / NCIMB 8455) (Ferrobacillus ferrooxidans (strain ATCC 23270)).